Consider the following 66-residue polypeptide: Pancreatic polypeptide prohormone (66 aa).

At tyrosine 36 the chain carries Tyrosine amide. Residues 60–66 (ELSPMDV) constitute a propeptide that is removed on maturation.

This sequence belongs to the NPY family.

It localises to the secreted. Its function is as follows. Hormone secreted by pancreatic cells that acts as a regulator of pancreatic and gastrointestinal functions probably by signaling through the G protein-coupled receptor NPY4R2. The chain is Pancreatic polypeptide prohormone (PPY) from Felis catus (Cat).